The chain runs to 259 residues: Thiazole synthase (259 aa).

Lysine 100 functions as the Schiff-base intermediate with DXP in the catalytic mechanism. 1-deoxy-D-xylulose 5-phosphate-binding positions include glycine 161, 187-188 (AG), and 209-210 (NT).

It belongs to the ThiG family. Homotetramer. Forms heterodimers with either ThiH or ThiS.

It is found in the cytoplasm. It carries out the reaction [ThiS sulfur-carrier protein]-C-terminal-Gly-aminoethanethioate + 2-iminoacetate + 1-deoxy-D-xylulose 5-phosphate = [ThiS sulfur-carrier protein]-C-terminal Gly-Gly + 2-[(2R,5Z)-2-carboxy-4-methylthiazol-5(2H)-ylidene]ethyl phosphate + 2 H2O + H(+). Its pathway is cofactor biosynthesis; thiamine diphosphate biosynthesis. Functionally, catalyzes the rearrangement of 1-deoxy-D-xylulose 5-phosphate (DXP) to produce the thiazole phosphate moiety of thiamine. Sulfur is provided by the thiocarboxylate moiety of the carrier protein ThiS. In vitro, sulfur can be provided by H(2)S. In Methylobacillus flagellatus (strain ATCC 51484 / DSM 6875 / VKM B-1610 / KT), this protein is Thiazole synthase.